We begin with the raw amino-acid sequence, 238 residues long: Sugar fermentation stimulation protein homolog (238 aa).

It belongs to the SfsA family.

This chain is Sugar fermentation stimulation protein homolog, found in Haemophilus influenzae (strain 86-028NP).